A 99-amino-acid polypeptide reads, in one-letter code: Bombyxin A-1 homolog (99 aa).

Residues 1–19 (MKTQVLFLVFALAAVMVSG) form the signal peptide. 3 disulfide bridges follow: Cys-27–Cys-86, Cys-39–Cys-99, and Cys-85–Cys-90. The propeptide at 48 to 76 (TPYISPENEGYGWRWLEPQRARQLDGARG) is c peptide like.

The protein belongs to the insulin family. In terms of assembly, heterodimer of a B chain and an A chain linked by two disulfide bonds.

It is found in the secreted. In terms of biological role, brain peptide responsible for activation of prothoracic glands to produce ecdysone in insects. The polypeptide is Bombyxin A-1 homolog (SBXA1) (Samia cynthia (Ailanthus silkmoth)).